Consider the following 698-residue polypeptide: Serine/alanine racemase (698 aa).

At 1–10 the chain is on the cytoplasmic side; that stretch reads MKNKGIDQFR. A helical transmembrane segment spans residues 11 to 31; sequence VIAAMMVVAIHCLPLHYLWPE. At 32–42 the chain is on the extracellular side; that stretch reads GDILITLTIFR. Residues 43–63 traverse the membrane as a helical segment; it reads VAVPFFFMISGYYVFAELAVA. The Cytoplasmic segment spans residues 64–81; that stretch reads NSYPSRQRVFNFIKKQLK. Residues 82–102 traverse the membrane as a helical segment; that stretch reads VYLLATLMFLPLALYSQTIGF. The Extracellular portion of the chain corresponds to 103-121; it reads DLPVGTLVQVLLVNGILYH. The chain crosses the membrane as a helical span at residues 122–142; that stretch reads LWYFPALITGSLLLTSLLIHV. At 143 to 147 the chain is on the cytoplasmic side; it reads SFKKV. The chain crosses the membrane as a helical span at residues 148–168; that stretch reads FWLAAGLYLIGLGGDSWFGLI. The Extracellular segment spans residues 169–183; that stretch reads QQTPIEPFYTAVFHL. Residues 184-204 traverse the membrane as a helical segment; the sequence is LDGTRNGIFFTPLFLCLGVLV. Over 205–216 the chain is Cytoplasmic; the sequence is RKQSEKRSLSKT. A helical membrane pass occupies residues 217–237; that stretch reads ALFFLISLIGLLIESAYLHGF. Residues 238-244 lie on the Extracellular side of the membrane; sequence SIPKHDS. A helical membrane pass occupies residues 245–265; sequence MYLFLPVVLFFLFPLILRWHP. At 266–274 the chain is on the cytoplasmic side; sequence HRTWKHPGQ. A helical transmembrane segment spans residues 275–295; that stretch reads LSLWLYLLHPYTIAGTHFLSQ. Residues 296–301 lie on the Extracellular side of the membrane; sequence KISILQ. A helical membrane pass occupies residues 302–322; sequence NNLINYLVVLILTIGFICLFL. At 323–698 the chain is on the cytoplasmic side; that stretch reads RQKHSWFRHK…IGPRVSARIK (376 aa). Residues 332-698 form a racemase region; the sequence is KQTTPVKRAV…IGPRVSARIK (367 aa). K371 functions as the Proton acceptor in the catalytic mechanism. K371 bears the N6-(pyridoxal phosphate)lysine mark. Residue R465 coordinates substrate. Residue Y597 is the Proton acceptor of the active site. M646 serves as a coordination point for substrate.

In the N-terminal section; belongs to the acyltransferase 3 family. This sequence in the C-terminal section; belongs to the alanine racemase family. As to quaternary structure, homodimer. Pyridoxal 5'-phosphate is required as a cofactor.

The protein resides in the cell membrane. The enzyme catalyses L-alanine = D-alanine. It catalyses the reaction L-serine = D-serine. It functions in the pathway amino-acid biosynthesis; D-alanine biosynthesis; D-alanine from L-alanine: step 1/1. Functionally, catalyzes the interconversion of L-serine and D-serine, and L-alanine and D-alanine. L-alanine is racemized at a rate that is 14% of that of L-serine. Together with VanC/VanC1 and VanXYC, required for vancomycin resistance in E.gallinarum strain BM4174. In Enterococcus gallinarum, this protein is Serine/alanine racemase.